Consider the following 212-residue polypeptide: Sclerostin (212 aa).

Residues 1 to 23 (MQLSLALCLVCLLVHAAFRVVEG) form the signal peptide. An N-linked (GlcNAc...) asparagine glycan is attached at asparagine 52. Cystine bridges form between cysteine 79–cysteine 133, cysteine 93–cysteine 147, cysteine 104–cysteine 164, and cysteine 108–cysteine 166. The CTCK domain maps to 81–171 (ELHFTRYVTD…ASCKCKRLTR (91 aa)). Asparagine 174 carries N-linked (GlcNAc...) asparagine glycosylation. The interval 179–212 (KDFGPEAARPQTGRKLRPRARGTKASRAELENAY) is disordered. Basic residues predominate over residues 190-202 (TGRKLRPRARGTK).

It belongs to the sclerostin family. Interacts with LRP4 (via the extracellular domain); the interaction facilitates the inhibition of Wnt signaling. Interacts with LRP5 (via the first two YWTD-EGF repeat domains); the interaction inhibits Wnt-mediated signaling. Interacts with LRP6.

It localises to the secreted. Its subcellular location is the extracellular space. The protein localises to the extracellular matrix. Negative regulator of bone growth that acts through inhibition of Wnt signaling and bone formation. In Bos taurus (Bovine), this protein is Sclerostin.